Here is a 440-residue protein sequence, read N- to C-terminus: 3-phosphoshikimate 1-carboxyvinyltransferase (440 aa).

3-phosphoshikimate-binding residues include Lys28, Ser29, and Arg33. Residue Lys28 coordinates phosphoenolpyruvate. 2 residues coordinate phosphoenolpyruvate: Gly98 and Arg126. 4 residues coordinate 3-phosphoshikimate: Ser171, Gln173, Asp318, and Lys345. Gln173 contributes to the phosphoenolpyruvate binding site. The active-site Proton acceptor is the Asp318. The phosphoenolpyruvate site is built by Arg349 and Arg391.

This sequence belongs to the EPSP synthase family. In terms of assembly, monomer.

It is found in the cytoplasm. It carries out the reaction 3-phosphoshikimate + phosphoenolpyruvate = 5-O-(1-carboxyvinyl)-3-phosphoshikimate + phosphate. It functions in the pathway metabolic intermediate biosynthesis; chorismate biosynthesis; chorismate from D-erythrose 4-phosphate and phosphoenolpyruvate: step 6/7. Its function is as follows. Catalyzes the transfer of the enolpyruvyl moiety of phosphoenolpyruvate (PEP) to the 5-hydroxyl of shikimate-3-phosphate (S3P) to produce enolpyruvyl shikimate-3-phosphate and inorganic phosphate. The protein is 3-phosphoshikimate 1-carboxyvinyltransferase of Anaeromyxobacter sp. (strain K).